Consider the following 169-residue polypeptide: Cell division inhibitor SulA (169 aa).

Positions 106–112 (ALRTGNY) are ftsZ binding. The lon protease binding stretch occupies residues 162–169 (KIHSNLYH).

The protein belongs to the SulA family. Interacts with FtsZ. Is rapidly cleaved and degraded by the Lon protease once DNA damage is repaired.

Functionally, component of the SOS system and an inhibitor of cell division. Accumulation of SulA causes rapid cessation of cell division and the appearance of long, non-septate filaments. In the presence of GTP, binds a polymerization-competent form of FtsZ in a 1:1 ratio, thus inhibiting FtsZ polymerization and therefore preventing it from participating in the assembly of the Z ring. This mechanism prevents the premature segregation of damaged DNA to daughter cells during cell division. The sequence is that of Cell division inhibitor SulA from Escherichia coli O81 (strain ED1a).